The sequence spans 954 residues: Mitogen-activated protein kinase kinase kinase 10 (954 aa).

Positions 16–81 constitute an SH3 domain; that stretch reads PAGPVWTAVF…PSNYVAPGAP (66 aa). The Protein kinase domain maps to 98 to 360; the sequence is LQLEEIIGVG…GSILKRLEVI (263 aa). Residues 104 to 112 and Lys-125 contribute to the ATP site; that span reads IGVGGFGKV. The active-site Proton acceptor is the Asp-222. A Phosphothreonine; by autocatalysis modification is found at Thr-258. Ser-262 is subject to Phosphoserine; by autocatalysis and MAP4K1. Leucine-zipper regions lie at residues 384-405 and 419-440; these read IQHM…EEEL and LRRR…ELHL. Disordered stretches follow at residues 490 to 665, 716 to 739, and 757 to 954; these read PTLD…RWGH, RFPR…PGLG, and STRS…HGSH. Ser-498, Ser-502, and Ser-506 each carry phosphoserine. Residues 501-511 are compositionally biased toward low complexity; sequence ASPPASPSIIP. Thr-558 carries the phosphothreonine modification. The span at 566 to 578 shows a compositional bias: basic and acidic residues; that stretch reads QKERVGGEERLKG. The segment covering 611–620 has biased composition (acidic residues); it reads EMEEFAEAED. A compositionally biased stretch (low complexity) spans 631-640; that stretch reads STPSYLSVPL. A compositionally biased stretch (pro residues) spans 773-790; it reads APSPPPSPPAPTPTPSPS. Position 857 is an omega-N-methylarginine (Arg-857). Positions 913 to 927 are enriched in pro residues; it reads PSRPDTPESPGPPSV.

This sequence belongs to the protein kinase superfamily. STE Ser/Thr protein kinase family. MAP kinase kinase kinase subfamily. Homodimer. Interacts with SH3RF2. Mg(2+) serves as cofactor. Post-translationally, autophosphorylation on serine and threonine residues within the activation loop plays a role in enzyme activation. Expressed in brain and skeletal muscle.

The catalysed reaction is L-seryl-[protein] + ATP = O-phospho-L-seryl-[protein] + ADP + H(+). The enzyme catalyses L-threonyl-[protein] + ATP = O-phospho-L-threonyl-[protein] + ADP + H(+). Its activity is regulated as follows. Homodimerization via the leucine zipper domains is required for autophosphorylation and subsequent activation. In terms of biological role, activates the JUN N-terminal pathway. This is Mitogen-activated protein kinase kinase kinase 10 (MAP3K10) from Homo sapiens (Human).